The following is a 129-amino-acid chain: Follitropin subunit beta (129 aa).

A signal peptide spans 1-20; that stretch reads MKTAQFYVLFFCWKAIWCNG. 6 disulfide bridges follow: C21–C69, C35–C84, C38–C122, C46–C100, C50–C102, and C105–C112. N-linked (GlcNAc...) asparagine glycans are attached at residues N25 and N42.

The protein belongs to the glycoprotein hormones subunit beta family. In terms of assembly, heterodimer. The active follitropin is a heterodimer composed of an alpha chain/CGA shared with other hormones and a unique beta chain/FSHB shown here.

Its subcellular location is the secreted. Functionally, together with the alpha chain CGA constitutes follitropin, the follicle-stimulating hormone, and provides its biological specificity to the hormone heterodimer. Binds FSHR, a G protein-coupled receptor, on target cells to activate downstream signaling pathways. Follitropin is involved in follicle development and spermatogenesis in reproductive organs. The polypeptide is Follitropin subunit beta (FSHB) (Trichosurus vulpecula (Brush-tailed possum)).